Reading from the N-terminus, the 37-residue chain is Large ribosomal subunit protein bL36c (37 aa).

It belongs to the bacterial ribosomal protein bL36 family.

The protein resides in the plastid. The sequence is that of Large ribosomal subunit protein bL36c from Aneura mirabilis (Parasitic liverwort).